The chain runs to 386 residues: Formate-dependent phosphoribosylglycinamide formyltransferase (386 aa).

N(1)-(5-phospho-beta-D-ribosyl)glycinamide is bound by residues 15 to 16 and Glu-75; that span reads EL. ATP is bound by residues Arg-107, Lys-148, 153-158, 188-191, and Glu-196; these read SSGKGQ and EQFI. Positions 112–301 constitute an ATP-grasp domain; that stretch reads ALAVQQLNLQ…EFELHLRAIV (190 aa). Glu-260 and Glu-272 together coordinate Mg(2+). Residues Asp-279, Lys-349, and 356–357 each bind N(1)-(5-phospho-beta-D-ribosyl)glycinamide; that span reads RR.

It belongs to the PurK/PurT family. Homodimer.

The enzyme catalyses N(1)-(5-phospho-beta-D-ribosyl)glycinamide + formate + ATP = N(2)-formyl-N(1)-(5-phospho-beta-D-ribosyl)glycinamide + ADP + phosphate + H(+). It participates in purine metabolism; IMP biosynthesis via de novo pathway; N(2)-formyl-N(1)-(5-phospho-D-ribosyl)glycinamide from N(1)-(5-phospho-D-ribosyl)glycinamide (formate route): step 1/1. Involved in the de novo purine biosynthesis. Catalyzes the transfer of formate to 5-phospho-ribosyl-glycinamide (GAR), producing 5-phospho-ribosyl-N-formylglycinamide (FGAR). Formate is provided by PurU via hydrolysis of 10-formyl-tetrahydrofolate. The chain is Formate-dependent phosphoribosylglycinamide formyltransferase from Francisella tularensis subsp. holarctica (strain LVS).